The chain runs to 159 residues: Major strawberry allergen Fra a 1-C (159 aa).

It belongs to the BetVI family. As to quaternary structure, monomer.

The polypeptide is Major strawberry allergen Fra a 1-C (Fragaria ananassa (Strawberry)).